The chain runs to 369 residues: tRNA/tmRNA (uracil-C(5))-methyltransferase (369 aa).

S-adenosyl-L-methionine is bound by residues Gln193, Tyr221, Asn226, Glu242, and Asp302. Catalysis depends on Cys327, which acts as the Nucleophile. Glu361 (proton acceptor) is an active-site residue.

This sequence belongs to the class I-like SAM-binding methyltransferase superfamily. RNA M5U methyltransferase family. TrmA subfamily.

It catalyses the reaction uridine(54) in tRNA + S-adenosyl-L-methionine = 5-methyluridine(54) in tRNA + S-adenosyl-L-homocysteine + H(+). The enzyme catalyses uridine(341) in tmRNA + S-adenosyl-L-methionine = 5-methyluridine(341) in tmRNA + S-adenosyl-L-homocysteine + H(+). Its function is as follows. Dual-specificity methyltransferase that catalyzes the formation of 5-methyluridine at position 54 (m5U54) in all tRNAs, and that of position 341 (m5U341) in tmRNA (transfer-mRNA). This is tRNA/tmRNA (uracil-C(5))-methyltransferase from Actinobacillus succinogenes (strain ATCC 55618 / DSM 22257 / CCUG 43843 / 130Z).